We begin with the raw amino-acid sequence, 432 residues long: Adenylosuccinate synthetase (432 aa).

GTP contacts are provided by residues 13–19 (GDEGKGK) and 41–43 (GHT). Aspartate 14 serves as the catalytic Proton acceptor. The Mg(2+) site is built by aspartate 14 and glycine 41. Residues 14-17 (DEGK), 39-42 (NAGH), threonine 130, arginine 144, glutamine 225, threonine 240, and arginine 304 contribute to the IMP site. The Proton donor role is filled by histidine 42. Substrate is bound at residue 300–306 (ATTGRRR). GTP-binding positions include arginine 306, 332 to 334 (KLD), and 415 to 417 (STG).

This sequence belongs to the adenylosuccinate synthetase family. As to quaternary structure, homodimer. Requires Mg(2+) as cofactor.

The protein localises to the cytoplasm. It carries out the reaction IMP + L-aspartate + GTP = N(6)-(1,2-dicarboxyethyl)-AMP + GDP + phosphate + 2 H(+). It participates in purine metabolism; AMP biosynthesis via de novo pathway; AMP from IMP: step 1/2. Functionally, plays an important role in the de novo pathway of purine nucleotide biosynthesis. Catalyzes the first committed step in the biosynthesis of AMP from IMP. The chain is Adenylosuccinate synthetase from Edwardsiella ictaluri (strain 93-146).